The sequence spans 483 residues: Alpha-tubulin N-acetyltransferase (483 aa).

Residues 1–186 (MEFRFNMHPL…NNFVVYEGFF (186 aa)) enclose the N-acetyltransferase domain. Acetyl-CoA-binding positions include 120 to 133 (FYVH…GLGR) and 156 to 165 (SEKLLGFLQK). Disordered regions lie at residues 204–231 (TASP…QTRT), 330–395 (ETLP…VLGS), and 437–472 (SVKI…GGGH). Residues 347–369 (YDFHPHHLELHDDTEGGGSHRDQ) show a composition bias toward basic and acidic residues. The span at 370–383 (SLSPQSVSQQASPV) shows a compositional bias: low complexity.

The protein belongs to the acetyltransferase ATAT1 family.

It carries out the reaction L-lysyl-[alpha-tubulin] + acetyl-CoA = N(6)-acetyl-L-lysyl-[alpha-tubulin] + CoA + H(+). Its function is as follows. Specifically acetylates 'Lys-40' in alpha-tubulin on the lumenal side of microtubules. Promotes microtubule destabilization and accelerates microtubule dynamics; this activity may be independent of acetylation activity. Acetylates alpha-tubulin with a slow enzymatic rate, due to a catalytic site that is not optimized for acetyl transfer. Enters the microtubule through each end and diffuses quickly throughout the lumen of microtubules. Acetylates only long/old microtubules because of its slow acetylation rate since it does not have time to act on dynamically unstable microtubules before the enzyme is released. The chain is Alpha-tubulin N-acetyltransferase from Anopheles gambiae (African malaria mosquito).